A 136-amino-acid polypeptide reads, in one-letter code: General odorant-binding protein 57e (136 aa).

The signal sequence occupies residues 1 to 20; that stretch reads MLDQLTLCLLLNFLCANVLA. Disulfide bonds link Cys-28-Cys-61, Cys-57-Cys-109, and Cys-98-Cys-118.

The protein belongs to the PBP/GOBP family.

Functionally, present in the aqueous fluid surrounding olfactory sensory dendrites and are thought to aid in the capture and transport of hydrophobic odorants into and through this fluid. This is General odorant-binding protein 57e from Drosophila melanogaster (Fruit fly).